The sequence spans 269 residues: Autophagy-related protein 27 (269 aa).

An N-terminal signal peptide occupies residues 1–17 (MWAIAGLISVLLAQAAA). The 158-residue stretch at 18–175 (FDCSAKELEH…SMYSKAACIT (158 aa)) folds into the MRH domain. At 18–193 (FDCSAKELEH…PPKKPDNGES (176 aa)) the chain is on the lumenal side. 3 cysteine pairs are disulfide-bonded: Cys20/Cys59, Cys69/Cys76, and Cys141/Cys173. The chain crosses the membrane as a helical span at residues 194–214 (WGWFTWIFIFLVLFLSIYIVG). Residues 215 to 269 (GAWFQYNKGNAIDFSSALREVLDNFVELLKGIPAFSREIIEKFTSNSNRGEYSAV) lie on the Cytoplasmic side of the membrane.

The protein belongs to the ATG27 family.

It is found in the cytoplasmic vesicle membrane. The protein localises to the golgi apparatus membrane. It localises to the mitochondrion membrane. Its subcellular location is the preautophagosomal structure membrane. Functionally, effector of VPS34 phosphatidylinositol 3-phosphate kinase signaling. Regulates the cytoplasm to vacuole transport (Cvt) vesicle formation. Plays a role in ATG protein retrieval from the pre-autophagosomal structure (PAS) and is especially required for autophagy-dependent cycling of ATG9. In Scheffersomyces stipitis (strain ATCC 58785 / CBS 6054 / NBRC 10063 / NRRL Y-11545) (Yeast), this protein is Autophagy-related protein 27 (ATG27).